The following is a 165-amino-acid chain: MEKETKEKIEKTVIEILSESDMKEITEFKVRKLASEKLAIDLSEKSHKAFVRSVVEKFLDEERAREYENSQVNKEEEDGDKDCGKGNKEFDDDGDLIICRLSDKRRVTIQEFKGKSLVSIREYYKKDGKELPTSKGISLTDEQWSTFKKNMPAIENAVKKMESRV.

Residues 3 to 60 (KETKEKIEKTVIEILSESDMKEITEFKVRKLASEKLAIDLSEKSHKAFVRSVVEKFLD) enclose the DEK-C domain. Positions 66-93 (EYENSQVNKEEEDGDKDCGKGNKEFDDD) are disordered.

The protein belongs to the transcriptional coactivator PC4 family.

Its subcellular location is the nucleus. Its function is as follows. General coactivator that functions cooperatively with TAFs and mediates functional interactions between upstream activators and the general transcriptional machinery. Binds single-stranded DNA. In Arabidopsis thaliana (Mouse-ear cress), this protein is RNA polymerase II transcriptional coactivator KELP (KELP).